Consider the following 120-residue polypeptide: MAAKIKKGDLVQVITGAKAERGGDRGKQGKVLRVFTDTNRVLVEGINRVTKHTRVGQSQRGTKTGGIEVVEAPIHISNVALVDPSTKKPTRVGFRLDTVEKNGVKKTVRIRVSKSSGKDI.

The protein belongs to the universal ribosomal protein uL24 family. As to quaternary structure, part of the 50S ribosomal subunit.

Its function is as follows. One of two assembly initiator proteins, it binds directly to the 5'-end of the 23S rRNA, where it nucleates assembly of the 50S subunit. Functionally, one of the proteins that surrounds the polypeptide exit tunnel on the outside of the subunit. The polypeptide is Large ribosomal subunit protein uL24 (Pseudarthrobacter chlorophenolicus (strain ATCC 700700 / DSM 12829 / CIP 107037 / JCM 12360 / KCTC 9906 / NCIMB 13794 / A6) (Arthrobacter chlorophenolicus)).